Consider the following 334-residue polypeptide: Chitin synthase export chaperone (334 aa).

7 helical membrane passes run 49–69 (IIFE…TVIM), 85–105 (ILSF…IDAG), 123–143 (GLSS…FQLY), 159–179 (LAAF…WAGL), 185–205 (VGLF…YVAM), 220–240 (LGDI…LYAF), and 244–264 (ICIA…CNLL).

Belongs to the CHS7 family.

The protein resides in the endoplasmic reticulum membrane. In terms of biological role, chaperone required for the export of the chitin synthase chs3 from the endoplasmic reticulum. Plays a critical role in cell wall integrity and virulence. In Fusarium oxysporum f. sp. lycopersici (strain 4287 / CBS 123668 / FGSC 9935 / NRRL 34936) (Fusarium vascular wilt of tomato), this protein is Chitin synthase export chaperone.